The following is a 443-amino-acid chain: Probable glycine dehydrogenase (decarboxylating) subunit 1 (443 aa).

Belongs to the GcvP family. N-terminal subunit subfamily. In terms of assembly, the glycine cleavage system is composed of four proteins: P, T, L and H. In this organism, the P 'protein' is a heterodimer of two subunits.

It catalyses the reaction N(6)-[(R)-lipoyl]-L-lysyl-[glycine-cleavage complex H protein] + glycine + H(+) = N(6)-[(R)-S(8)-aminomethyldihydrolipoyl]-L-lysyl-[glycine-cleavage complex H protein] + CO2. In terms of biological role, the glycine cleavage system catalyzes the degradation of glycine. The P protein binds the alpha-amino group of glycine through its pyridoxal phosphate cofactor; CO(2) is released and the remaining methylamine moiety is then transferred to the lipoamide cofactor of the H protein. In Nitratidesulfovibrio vulgaris (strain ATCC 29579 / DSM 644 / CCUG 34227 / NCIMB 8303 / VKM B-1760 / Hildenborough) (Desulfovibrio vulgaris), this protein is Probable glycine dehydrogenase (decarboxylating) subunit 1.